We begin with the raw amino-acid sequence, 182 residues long: Probable inosine/xanthosine triphosphatase (182 aa).

Residues Glu42 and Asp69 each coordinate Mg(2+).

It belongs to the YjjX NTPase family. As to quaternary structure, homodimer. Requires Mg(2+) as cofactor. It depends on Mn(2+) as a cofactor.

The catalysed reaction is XTP + H2O = XDP + phosphate + H(+). It carries out the reaction ITP + H2O = IDP + phosphate + H(+). Phosphatase that hydrolyzes non-canonical purine nucleotides such as XTP and ITP to their respective diphosphate derivatives. Probably excludes non-canonical purines from DNA/RNA precursor pool, thus preventing their incorporation into DNA/RNA and avoiding chromosomal lesions. The polypeptide is Probable inosine/xanthosine triphosphatase (Methanothermobacter thermautotrophicus (strain ATCC 29096 / DSM 1053 / JCM 10044 / NBRC 100330 / Delta H) (Methanobacterium thermoautotrophicum)).